A 381-amino-acid polypeptide reads, in one-letter code: Probable glucuronosyltransferase Os04g0103100 (381 aa).

Residues 1 to 69 (MASIRRPHSP…HTSFRRPLPR (69 aa)) are Cytoplasmic-facing. Positions 21 to 50 (HLGPFASSSPPSSPLRHSSSSSSPRSAAHH) are disordered. Over residues 26 to 46 (ASSSPPSSPLRHSSSSSSPRS) the composition is skewed to low complexity. Residues 70 to 90 (FAAFFLLGSFLGLLHFLSHLP) traverse the membrane as a helical; Signal-anchor for type II membrane protein segment. Over 91-381 (RPLGPIPNPN…TDLDVIIPLK (291 aa)) the chain is Lumenal. Positions 96 to 122 (IPNPNSHHRHRDPFPILQHPHPPSTPH) are disordered. N-linked (GlcNAc...) asparagine glycans are attached at residues Asn194 and Asn296.

It belongs to the glycosyltransferase 43 family.

Its subcellular location is the golgi apparatus membrane. Involved in the synthesis of glucuronoxylan hemicellulose in secondary cell walls. The protein is Probable glucuronosyltransferase Os04g0103100 of Oryza sativa subsp. japonica (Rice).